The primary structure comprises 652 residues: MKKRIKELTDLLNRYRYDYYTKDAPSVSDSDYDKLYRELVTLEQSYPEYVLQDSPTQQVGGTILKGFEKYRHQYPLFSLQDAFSREELDAFDKRVKAEFPNATYLAELKIDGLSISLSYENGFLQVGATRGDGNIGENITENIKKIKDIPHQLSEPLTITVRGEAYMSRQSFKAINEARQENGETEFANPRNAAAGTLRQLDTSVVAKRQLATFLYQEASPTARNQQNEVLAELADLGFSVNPYYQLTSSMDEIWDFIKTIEAKRDQLAYDIDGVVIKVNSLAMQEELGFTVKAPRWAIAYKFPAEEKEAEILSVDWTVGRTGVVTPTANLTPVQLAGTTVSRATLHNVDYIAEKDIRIGDTVIVYKAGDIIPAVLNVVMSKRNQQEVMLIPKLCPSCGSELVHFEDEVALRCINPLCPSLIQRSLEHFASRDAMNITGLGPAIVEKLFLAGFVHDVADIYQLTKEDFMQLDGIKEKSADKLLAAIEASKSNSAEKLLFGLGIRHIGSKVSRLILEVYGDISALLTAKEEEIARIDGLGSTIAQSLTQYFEQKTAAILVDELKTAGVNMHYSGQKVNSDAALFGLTVVLTGKLNQLNRNEAKDKLEALGAKVTGSVSKKTDLVIAGSDAGSKLEKAKSLGIRIEDEDWLRKF.

NAD(+) contacts are provided by residues 29–33 (DSDYD), 78–79 (SL), and Glu-107. The N6-AMP-lysine intermediate role is filled by Lys-109. NAD(+) is bound by residues Arg-130, Glu-164, Lys-278, and Lys-302. 4 residues coordinate Zn(2+): Cys-395, Cys-398, Cys-413, and Cys-418. The 76-residue stretch at 577–652 (NSDAALFGLT…IEDEDWLRKF (76 aa)) folds into the BRCT domain.

It belongs to the NAD-dependent DNA ligase family. LigA subfamily. The cofactor is Mg(2+). Mn(2+) is required as a cofactor.

The catalysed reaction is NAD(+) + (deoxyribonucleotide)n-3'-hydroxyl + 5'-phospho-(deoxyribonucleotide)m = (deoxyribonucleotide)n+m + AMP + beta-nicotinamide D-nucleotide.. Functionally, DNA ligase that catalyzes the formation of phosphodiester linkages between 5'-phosphoryl and 3'-hydroxyl groups in double-stranded DNA using NAD as a coenzyme and as the energy source for the reaction. It is essential for DNA replication and repair of damaged DNA. The sequence is that of DNA ligase from Streptococcus pyogenes serotype M6 (strain ATCC BAA-946 / MGAS10394).